We begin with the raw amino-acid sequence, 886 residues long: Protein translocase subunit SecA (886 aa).

ATP is bound by residues Q85, 103 to 107, and D492; that span reads GEGKT. A compositionally biased stretch (basic and acidic residues) spans 841 to 864; the sequence is RVVENRYAEEGPKQPARRENKVGR. The tract at residues 841 to 866 is disordered; it reads RVVENRYAEEGPKQPARRENKVGRND. The Zn(2+) site is built by C868, C870, C879, and C880.

It belongs to the SecA family. In terms of assembly, monomer and homodimer. Part of the essential Sec protein translocation apparatus which comprises SecA, SecYEG and auxiliary proteins SecDF. Other proteins may also be involved. Zn(2+) is required as a cofactor.

Its subcellular location is the cell membrane. The protein resides in the cytoplasm. The catalysed reaction is ATP + H2O + cellular proteinSide 1 = ADP + phosphate + cellular proteinSide 2.. In terms of biological role, part of the Sec protein translocase complex. Interacts with the SecYEG preprotein conducting channel. Has a central role in coupling the hydrolysis of ATP to the transfer of proteins into and across the cell membrane, serving as an ATP-driven molecular motor driving the stepwise translocation of polypeptide chains across the membrane. The sequence is that of Protein translocase subunit SecA from Pelotomaculum thermopropionicum (strain DSM 13744 / JCM 10971 / SI).